The primary structure comprises 187 residues: Translation initiation factor IF-3 (187 aa).

It belongs to the IF-3 family. As to quaternary structure, monomer.

It localises to the cytoplasm. Functionally, IF-3 binds to the 30S ribosomal subunit and shifts the equilibrium between 70S ribosomes and their 50S and 30S subunits in favor of the free subunits, thus enhancing the availability of 30S subunits on which protein synthesis initiation begins. The sequence is that of Translation initiation factor IF-3 from Leptospira biflexa serovar Patoc (strain Patoc 1 / Ames).